Reading from the N-terminus, the 250-residue chain is Expansin-like B1 (250 aa).

Positions 1–24 (MKHSHVLLLLFVQVIVLLPLLCLS) are cleaved as a signal peptide. The Expansin-like EG45 domain maps to 45–149 (RGHCGYGEFG…QRIPCRYAGY (105 aa)). An N-linked (GlcNAc...) asparagine glycan is attached at asparagine 72. Residues 163-245 (HYLAILVLYV…DWTAGATYDS (83 aa)) form the Expansin-like CBD domain.

It belongs to the expansin family. Expansin-like B subfamily.

Its subcellular location is the secreted. This chain is Expansin-like B1 (EXLB1), found in Arabidopsis thaliana (Mouse-ear cress).